A 389-amino-acid chain; its full sequence is Vacuolar protein sorting-associated protein vts1 (389 aa).

Residues 149 to 335 (NPQRKAKTPS…RPSQPTKASP (187 aa)) are disordered. Composition is skewed to polar residues over residues 156–177 (TPSN…TLPT), 184–219 (TNAS…SSEP), and 227–282 (SLSS…PESK). Residues 294-306 (TSITTTSTSIDPS) show a composition bias toward low complexity. Residues 308 to 334 (AFSSKSTLATTRTNAPLSRPSQPTKAS) show a composition bias toward polar residues.

It belongs to the VTA1 family. Homodimer (in cytoplasm).

The protein resides in the cytoplasm. The protein localises to the endosome membrane. Functionally, has a role in the formation of the multivesicular body (MVB). Required for the sorting of lipids to form intralumenal vesicles and for fluid-phase transport to the vacuole. Required for sorting several plasma membrane proteins into the MVB. The chain is Vacuolar protein sorting-associated protein vts1 (vts1) from Schizosaccharomyces pombe (strain 972 / ATCC 24843) (Fission yeast).